Consider the following 171-residue polypeptide: ATP synthase subunit b (171 aa).

A helical transmembrane segment spans residues 10 to 30 (GLYYGDSIFYAVCFLLLMWII).

The protein belongs to the ATPase B chain family. In terms of assembly, F-type ATPases have 2 components, F(1) - the catalytic core - and F(0) - the membrane proton channel. F(1) has five subunits: alpha(3), beta(3), gamma(1), delta(1), epsilon(1). F(0) has three main subunits: a(1), b(2) and c(10-14). The alpha and beta chains form an alternating ring which encloses part of the gamma chain. F(1) is attached to F(0) by a central stalk formed by the gamma and epsilon chains, while a peripheral stalk is formed by the delta and b chains.

It localises to the cell membrane. In terms of biological role, f(1)F(0) ATP synthase produces ATP from ADP in the presence of a proton or sodium gradient. F-type ATPases consist of two structural domains, F(1) containing the extramembraneous catalytic core and F(0) containing the membrane proton channel, linked together by a central stalk and a peripheral stalk. During catalysis, ATP synthesis in the catalytic domain of F(1) is coupled via a rotary mechanism of the central stalk subunits to proton translocation. Its function is as follows. Component of the F(0) channel, it forms part of the peripheral stalk, linking F(1) to F(0). The chain is ATP synthase subunit b from Levilactobacillus brevis (strain ATCC 367 / BCRC 12310 / CIP 105137 / JCM 1170 / LMG 11437 / NCIMB 947 / NCTC 947) (Lactobacillus brevis).